A 241-amino-acid polypeptide reads, in one-letter code: Protein McbE (241 aa).

The next 6 helical transmembrane spans lie at 17 to 35 (TPFS…FFFL), 54 to 72 (ISWF…NYCL), 105 to 123 (LIMS…LTGF), 131 to 149 (IVMI…MVSL), 163 to 181 (STIY…IVSL), and 212 to 230 (LMTI…ISAL).

It localises to the cell membrane. Functionally, together with two further proteins McbF and McbG this protein causes immunity to the peptide antibiotic microcin B17 (MccB17), which inhibits DNA replication in enterobacteriaceae. Immunity is determined by two different mechanisms. McbE is involved in the production of extracellular MccB17 and, in a complex with McbF it also serves as 'pump' for the export of active MccB17 from the cytoplasm to the periplasmic space. The polypeptide is Protein McbE (mcbE) (Escherichia coli).